Reading from the N-terminus, the 460-residue chain is Amino acid transporter AVT6A (460 aa).

11 helical membrane-spanning segments follow: residues 45-65, 66-86, 120-140, 172-192, 199-219, 238-258, 281-301, 336-356, 371-391, 394-414, and 427-447; these read FSGAVFNLATTIIGAGIMALP, ATMKILGLGLGITMIVVMAFL, ILLQVAVLVNNIGVLIVYMII, AAILLITTLGVFAPLACFKRI, SALSVALAVVFLIITAGISIM, LTSFWNLFTVVPVLVTAFICH, ALMLCSSVYIMTSIFGFLLFG, LMLVFPIVFYPLRINIDGLLF, CLTAGLISVIFLGANFIPSIW, FQFTGATAAVCLGFIFPASII, and TTLAIFMIVLAVLSNAIAIYS.

It belongs to the amino acid/polyamine transporter 2 family. Amino acid/auxin permease (AAAP) (TC 2.A.18.6) subfamily.

It is found in the membrane. The chain is Amino acid transporter AVT6A from Arabidopsis thaliana (Mouse-ear cress).